The chain runs to 482 residues: Glutamyl-tRNA(Gln) amidotransferase subunit A (482 aa).

Active-site charge relay system residues include lysine 75 and serine 150. The Acyl-ester intermediate role is filled by serine 174.

The protein belongs to the amidase family. GatA subfamily. In terms of assembly, heterotrimer of A, B and C subunits.

It catalyses the reaction L-glutamyl-tRNA(Gln) + L-glutamine + ATP + H2O = L-glutaminyl-tRNA(Gln) + L-glutamate + ADP + phosphate + H(+). Allows the formation of correctly charged Gln-tRNA(Gln) through the transamidation of misacylated Glu-tRNA(Gln) in organisms which lack glutaminyl-tRNA synthetase. The reaction takes place in the presence of glutamine and ATP through an activated gamma-phospho-Glu-tRNA(Gln). This Cyanothece sp. (strain PCC 7425 / ATCC 29141) protein is Glutamyl-tRNA(Gln) amidotransferase subunit A.